The sequence spans 583 residues: Atlastin-2 (583 aa).

Positions 1–44 (MAEGDEAARGQQPHQGLWRRRRTSDPSAAVNHVSSTTSLGENYE) are disordered. The N-terminal hypervariable region (HVR) stretch occupies residues 1-60 (MAEGDEAARGQQPHQGLWRRRRTSDPSAAVNHVSSTTSLGENYEDDDLVNSDEVMKKPCP). Residues 1–476 (MAEGDEAARG…NIFYAARTPA (476 aa)) are Cytoplasmic-facing. Residue Ser-24 is modified to Phosphoserine. The region spanning 91 to 336 (DLNIVVVSVA…LVPLLLAPEN (246 aa)) is the GB1/RHD3-type G domain. Residues Arg-104, Lys-105, Gly-106, Lys-107, Ser-108, Phe-109, Gln-175, Arg-244, and Asp-245 each coordinate GDP. GTP-binding residues include Arg-104, Lys-105, Gly-106, Lys-107, Ser-108, and Phe-109. Residue Ser-108 participates in Mg(2+) binding. Residues Arg-244 and Asp-245 each coordinate GTP. Residues 256-284 (LEGGKQFLEKRLQVKQNQHEELQNVRKHI) adopt a coiled-coil conformation. At Lys-270 the chain carries N6-methyllysine. Positions 303 and 306 each coordinate GDP. Val-303 is a binding site for GTP. Positions 374–465 (MLQATAEANN…YANFIKHNDG (92 aa)) are 3HB (three-helix bundle) domain. Residues 466 to 474 (KNIFYAART) form a linker region. The helical transmembrane segment at 477-497 (TLFAVMFAMYIISGLTGFIGL) threads the bilayer. Over 498 to 499 (NS) the chain is Lumenal. The helical transmembrane segment at 500–520 (IAVLCNLVMGLALIFLCTWAY) threads the bilayer. The Cytoplasmic segment spans residues 521 to 583 (VKYSGEFREI…VSHHARLKTD (63 aa)). The segment at 547–583 (KPLGDNLMEENIRQSVTNSIKAGLTDQVSHHARLKTD) is autoinhibitory domain.

It belongs to the TRAFAC class dynamin-like GTPase superfamily. GB1/RHD3 GTPase family. GB1 subfamily. In terms of assembly, monomeric and homodimeric. The homodimer, transiently formed by two molecules on opposing membranes, is the active form mediating ER membrane fusion. Interacts with REEP5 and RTN3; these proteins are involved in endoplasmic reticulum tubular network organization. Interacts with ZFYVE27; both proteins are involved in endoplasmic reticulum tubular network organization. As to expression, expressed in peripheral tissues (at protein level).

The protein localises to the endoplasmic reticulum membrane. It carries out the reaction GTP + H2O = GDP + phosphate + H(+). Its activity is regulated as follows. With its alternative C-terminus disrupting the autoinhibitory domain, this brain-specific isoform is probably more active at fusing ER membranes. Atlastin-2 (ATL2) is a membrane-anchored GTPase that mediates the GTP-dependent fusion of endoplasmic reticulum (ER) membranes, maintaining the continuous ER network. It facilitates the formation of three-way junctions where ER tubules intersect. Two atlastin-2 on neighboring ER tubules bind GTP and form loose homodimers through the GB1/RHD3-type G domains and 3HB regions. Upon GTP hydrolysis, the 3HB regions tighten, pulling the membranes together to drive their fusion. After fusion, the homodimer disassembles upon release of inorganic phosphate (Pi). Subsequently, GDP dissociates, resetting the monomers to a conformation ready for a new fusion cycle. The sequence is that of Atlastin-2 from Homo sapiens (Human).